Consider the following 606-residue polypeptide: Armadillo repeat-containing X-linked protein 5 (606 aa).

The tract at residues 1–85 (MIGSKTKRKA…KVKKKKDKTN (85 aa)) is disordered. Over residues 15-26 (GASSKPGTNSPA) the composition is skewed to polar residues. The segment covering 40-59 (VKAEPKEEWGNQAEARDEAV) has biased composition (basic and acidic residues). 4 ARM repeats span residues 349 to 388 (CKSR…GISP), 470 to 509 (VKFD…CLSK), 511 to 551 (QANT…NINF), and 568 to 606 (SELI…ILKL).

Belongs to the eutherian X-chromosome-specific Armcx family. In terms of tissue distribution, highly expressed in the developing neural tissues, neural crest derivatives and hind limbs.

The chain is Armadillo repeat-containing X-linked protein 5 (Armcx5) from Mus musculus (Mouse).